Reading from the N-terminus, the 365-residue chain is Endophilin-B1 (365 aa).

Methionine 1 is modified (N-acetylmethionine). The tract at residues 1–30 is membrane-binding amphipathic helix; it reads MNIMDFNVKKLAADAGTFLSRAVQFTEEKL. Residues 1–37 form a required for membrane binding region; it reads MNIMDFNVKKLAADAGTFLSRAVQFTEEKLGQAEKTE. The BAR domain occupies 27-261; the sequence is EEKLGQAEKT…LGSFPSNYLS (235 aa). Phosphothreonine; by CDK5 is present on threonine 145. Positions 155–186 form a coiled coil; sequence YKTIAKERKLLQNKRLDLDAAKTRLKKAKAAE. In terms of domain architecture, SH3 spans 305–365; it reads SNNRKARVLY…VPITYLELLN (61 aa).

It belongs to the endophilin family. As to quaternary structure, homodimer, and heterodimer with SH3GLB2. Binds BAX; induction of apoptosis augments BAX binding. Binds DNM1, HTT, AMPH, BIN1 and ARFGAP1. Interacts with UVRAG; UVRAG bridges the interaction to BECN1 indicative for an association with the PI3K complex II (PI3KC3-C2). Isoform 3 interacts with PPP1CC; this interaction leads to the inhibition of phosphatase activity. Phosphorylated at Thr-145 by CDK5; this phosphorylation is required for autophagy induction in starved neurons and facilitates homodimerization. Isoform 1 is widely expressed. Isoform 2 is brain-specific. Isoform 3 is predominantly expressed in testis, but it is also detected in liver and, at much lower levels, in skin, stomach and ovary.

The protein resides in the cytoplasm. It is found in the golgi apparatus membrane. The protein localises to the mitochondrion outer membrane. It localises to the cytoplasmic vesicle. Its subcellular location is the autophagosome membrane. The protein resides in the midbody. Functionally, may be required for normal outer mitochondrial membrane dynamics. Required for coatomer-mediated retrograde transport in certain cells. May recruit other proteins to membranes with high curvature. May promote membrane fusion. Involved in activation of caspase-dependent apoptosis by promoting BAX/BAK1 activation. Isoform 1 acts proapoptotic in fibroblasts. Involved in caspase-independent apoptosis during nutrition starvation and involved in the regulation of autophagy. Activates lipid kinase activity of PIK3C3 during autophagy probably by associating with the PI3K complex II (PI3KC3-C2). Associated with PI3KC3-C2 during autophagy may regulate the trafficking of ATG9A from the Golgi complex to the peripheral cytoplasm for the formation of autophagosomes by inducing Golgi membrane tubulation and fragmentation. Involved in regulation of degradative endocytic trafficking and cytokinesis, probably in the context of PI3KC3-C2. Isoform 2 acts antiapoptotic in neuronal cells; involved in maintenance of mitochondrial morphology and promotes neuronal viability. The polypeptide is Endophilin-B1 (Sh3glb1) (Mus musculus (Mouse)).